We begin with the raw amino-acid sequence, 608 residues long: 1-deoxy-D-xylulose-5-phosphate synthase (608 aa).

Thiamine diphosphate contacts are provided by residues His66 and 107–109 (GHA). Asp138 contacts Mg(2+). Residues 139–140 (GA), Asn167, Phe277, and Glu350 each bind thiamine diphosphate. Residue Asn167 coordinates Mg(2+).

The protein belongs to the transketolase family. DXPS subfamily. In terms of assembly, homodimer. Requires Mg(2+) as cofactor. The cofactor is thiamine diphosphate.

The catalysed reaction is D-glyceraldehyde 3-phosphate + pyruvate + H(+) = 1-deoxy-D-xylulose 5-phosphate + CO2. It functions in the pathway metabolic intermediate biosynthesis; 1-deoxy-D-xylulose 5-phosphate biosynthesis; 1-deoxy-D-xylulose 5-phosphate from D-glyceraldehyde 3-phosphate and pyruvate: step 1/1. Its function is as follows. Catalyzes the acyloin condensation reaction between C atoms 2 and 3 of pyruvate and glyceraldehyde 3-phosphate to yield 1-deoxy-D-xylulose-5-phosphate (DXP). The protein is 1-deoxy-D-xylulose-5-phosphate synthase of Thermotoga maritima (strain ATCC 43589 / DSM 3109 / JCM 10099 / NBRC 100826 / MSB8).